A 273-amino-acid polypeptide reads, in one-letter code: Polyamine aminopropyltransferase (273 aa).

One can recognise a PABS domain in the interval 5–238 (ENWFSERYSD…GFWSFTVASP (234 aa)). Glutamine 34 contacts S-methyl-5'-thioadenosine. Positions 65 and 90 each coordinate spermidine. Residues glutamate 109 and 140–141 (DG) contribute to the S-methyl-5'-thioadenosine site. Aspartate 158 (proton acceptor) is an active-site residue. 158–161 (DSTD) provides a ligand contact to spermidine. Position 165 (proline 165) interacts with S-methyl-5'-thioadenosine.

Belongs to the spermidine/spermine synthase family. In terms of assembly, homodimer or homotetramer.

Its subcellular location is the cytoplasm. The enzyme catalyses S-adenosyl 3-(methylsulfanyl)propylamine + putrescine = S-methyl-5'-thioadenosine + spermidine + H(+). The protein operates within amine and polyamine biosynthesis; spermidine biosynthesis; spermidine from putrescine: step 1/1. Functionally, catalyzes the irreversible transfer of a propylamine group from the amino donor S-adenosylmethioninamine (decarboxy-AdoMet) to putrescine (1,4-diaminobutane) to yield spermidine. In Thermoplasma acidophilum (strain ATCC 25905 / DSM 1728 / JCM 9062 / NBRC 15155 / AMRC-C165), this protein is Polyamine aminopropyltransferase.